A 209-amino-acid chain; its full sequence is Potassium-transporting ATPase KdpC subunit (209 aa).

Residues 11–31 (MILALTVLTGLAYPLAVTAVA) form a helical membrane-spanning segment. The interval 188 to 209 (AQAPTPRQPEPGHPEPGRPEVR) is disordered. Residues 197–209 (EPGHPEPGRPEVR) show a composition bias toward basic and acidic residues.

It belongs to the KdpC family. As to quaternary structure, the system is composed of three essential subunits: KdpA, KdpB and KdpC.

The protein localises to the cell inner membrane. Part of the high-affinity ATP-driven potassium transport (or Kdp) system, which catalyzes the hydrolysis of ATP coupled with the electrogenic transport of potassium into the cytoplasm. This subunit acts as a catalytic chaperone that increases the ATP-binding affinity of the ATP-hydrolyzing subunit KdpB by the formation of a transient KdpB/KdpC/ATP ternary complex. The polypeptide is Potassium-transporting ATPase KdpC subunit (Rhodospirillum centenum (strain ATCC 51521 / SW)).